The following is a 429-amino-acid chain: Enolase (429 aa).

Glutamine 164 serves as a coordination point for (2R)-2-phosphoglycerate. Glutamate 206 functions as the Proton donor in the catalytic mechanism. The Mg(2+) site is built by aspartate 243, glutamate 286, and aspartate 313. Positions 338, 367, 368, and 389 each coordinate (2R)-2-phosphoglycerate. Lysine 338 (proton acceptor) is an active-site residue.

Belongs to the enolase family. Requires Mg(2+) as cofactor.

Its subcellular location is the cytoplasm. The protein localises to the secreted. It localises to the cell surface. It catalyses the reaction (2R)-2-phosphoglycerate = phosphoenolpyruvate + H2O. It functions in the pathway carbohydrate degradation; glycolysis; pyruvate from D-glyceraldehyde 3-phosphate: step 4/5. Its function is as follows. Catalyzes the reversible conversion of 2-phosphoglycerate (2-PG) into phosphoenolpyruvate (PEP). It is essential for the degradation of carbohydrates via glycolysis. The chain is Enolase from Thermosipho melanesiensis (strain DSM 12029 / CIP 104789 / BI429).